We begin with the raw amino-acid sequence, 137 residues long: Large ribosomal subunit protein uL16 (137 aa).

This sequence belongs to the universal ribosomal protein uL16 family. As to quaternary structure, part of the 50S ribosomal subunit.

Functionally, binds 23S rRNA and is also seen to make contacts with the A and possibly P site tRNAs. This is Large ribosomal subunit protein uL16 from Wolbachia pipientis subsp. Culex pipiens (strain wPip).